The primary structure comprises 707 residues: MGEHRLARSAFLWGLSGIYLFAFVSLYVQIPGLYGREGILPAWKMLRFTGKGFWEQMKDSPSLLWFGPRLGLDTEMTMELICLLGALLSLGALLFSCLRDSLVFLLLWVFYLSLYQVGQVFLYFQWDSLLLETGFLAILVAPLHAMRWKTSVWSAHDGVTFWLTRWLLFRLMFASGVVKLTSRCPTWWGLTALTYHYETQCIPNPAAWYAHQLPVWLQKFSVVATFFIEIGVPWLFFLPFRRLRLFSFYSQVLLQILIIITGNYNFFNLLTIVLCCSMLDDQHIAFFQRHKKTQHKGGIATSAFSLRSLVSLLEIPIFGLLVFWTVKYFDLQINWDKHSLESRTAFTYHDFQQWLRTITFPSIWIAAASLGWEILKGMYRSASVRGFFWKLWSTLQWLMFSCAAAAMFTISLVPYTYMDFESNGQLWPEVHQMFNTVDRYQLVNSYGLFRRMTGVGGRPEVVVEGSFDRETWTEIEFMYKPGNISTIPTVIVPHQPRLDWQMWFAALSHHSHSPWFASFVYRLLQGNKDVIHLVQNDESLYPFHANPPTYIRAQQYKYWFTEVDQSGHMPKSWWRRRHVEEFFPAVFLDDPFLDNLLSQHGLKDKPPARRSLDAPIPFVLKLIRDFLHPLPAPLLLHSFIFGIFTIYFLQAMFGGVSRPSVAKQRHSMPPNEKKKQKPNSGQGESASSKSSGHGTDTVRRNKKNEKS.

Transmembrane regions (helical) follow at residues 10 to 30 (AFLW…YVQI), 78 to 98 (MELI…FSCL), 102 to 122 (LVFL…QVFL), 126 to 146 (WDSL…LHAM), 158 to 178 (GVTF…SGVV), 220 to 240 (FSVV…FLPF), 256 to 276 (ILII…VLCC), 309 to 329 (LVSL…VKYF), 358 to 378 (ITFP…LKGM), and 395 to 415 (LQWL…LVPY). Asn483 carries an N-linked (GlcNAc...) asparagine glycan. A helical membrane pass occupies residues 634-654 (LLLHSFIFGIFTIYFLQAMFG). Residues 661–707 (VAKQRHSMPPNEKKKQKPNSGQGESASSKSSGHGTDTVRRNKKNEKS) form a disordered region. Positions 680-694 (SGQGESASSKSSGHG) are enriched in low complexity. Residues 696–707 (DTVRRNKKNEKS) are compositionally biased toward basic and acidic residues.

It belongs to the lipase maturation factor family.

Its subcellular location is the endoplasmic reticulum membrane. Its function is as follows. Involved in the maturation of specific proteins in the endoplasmic reticulum. The chain is Lipase maturation factor 2 (lmf2) from Xenopus laevis (African clawed frog).